A 479-amino-acid chain; its full sequence is NADH dehydrogenase [ubiquinone] flavoprotein 1, mitochondrial (479 aa).

103–112 (GRGGAGFPSG) lines the NADH pocket. Residue 216–264 (RGAGAYICGEETALIESIEGKQGKPRLKPPFPAMAGLYGCPTTVTNVET) participates in FMN binding. 4 residues coordinate [4Fe-4S] cluster: C396, C399, C402, and C442.

Belongs to the complex I 51 kDa subunit family. As to quaternary structure, complex I is composed of about 45 different subunits. This is a component of the flavoprotein-sulfur (FP) fragment of the enzyme. It depends on FMN as a cofactor. The cofactor is [4Fe-4S] cluster.

It is found in the mitochondrion inner membrane. The catalysed reaction is a ubiquinone + NADH + 5 H(+)(in) = a ubiquinol + NAD(+) + 4 H(+)(out). Core subunit of the mitochondrial membrane respiratory chain NADH dehydrogenase (Complex I) that is believed to belong to the minimal assembly required for catalysis. Complex I functions in the transfer of electrons from NADH to the respiratory chain. The immediate electron acceptor for the enzyme is believed to be ubiquinone. This chain is NADH dehydrogenase [ubiquinone] flavoprotein 1, mitochondrial (ndufv1), found in Dictyostelium discoideum (Social amoeba).